The chain runs to 456 residues: Putative alanyl-tRNA editing protein alaX (456 aa).

Positions 125, 129, 240, and 244 each coordinate Zn(2+).

The protein belongs to the class-II aminoacyl-tRNA synthetase family. Alax-L subfamily. It depends on Zn(2+) as a cofactor.

In terms of biological role, may function in trans to edit the amino acid moiety from incorrectly charged tRNA(Ala). This is Putative alanyl-tRNA editing protein alaX from Saccharomyces cerevisiae (strain ATCC 204508 / S288c) (Baker's yeast).